Reading from the N-terminus, the 289-residue chain is 4-diphosphocytidyl-2-C-methyl-D-erythritol kinase (289 aa).

Lys-10 is a catalytic residue. 95-105 contributes to the ATP binding site; the sequence is PVSAGMGGGSA. Asp-137 is a catalytic residue.

Belongs to the GHMP kinase family. IspE subfamily.

The enzyme catalyses 4-CDP-2-C-methyl-D-erythritol + ATP = 4-CDP-2-C-methyl-D-erythritol 2-phosphate + ADP + H(+). It participates in isoprenoid biosynthesis; isopentenyl diphosphate biosynthesis via DXP pathway; isopentenyl diphosphate from 1-deoxy-D-xylulose 5-phosphate: step 3/6. Functionally, catalyzes the phosphorylation of the position 2 hydroxy group of 4-diphosphocytidyl-2C-methyl-D-erythritol. This chain is 4-diphosphocytidyl-2-C-methyl-D-erythritol kinase, found in Ligilactobacillus salivarius (strain UCC118) (Lactobacillus salivarius).